The primary structure comprises 541 residues: Threonine--tRNA ligase catalytic subunit (541 aa).

The tract at residues 135 to 429 is catalytic; it reads DHRIIGERMD…LLEHFRGKLP (295 aa). 3 residues coordinate Zn(2+): C227, H278, and H406.

It belongs to the class-II aminoacyl-tRNA synthetase family. Homodimer. Probably interacts with its editing subunit. Zn(2+) serves as cofactor.

It is found in the cytoplasm. It catalyses the reaction tRNA(Thr) + L-threonine + ATP = L-threonyl-tRNA(Thr) + AMP + diphosphate + H(+). Functionally, catalyzes the attachment of threonine to tRNA(Thr) in a two-step reaction: L-threonine is first activated by ATP to form Thr-AMP and then transferred to the acceptor end of tRNA(Thr). Also activates L-serine and transfers it to tRNA(Thr) but cannot deacylate incorrectly charged amino acid; unlike most archaea the editing function is found in a freestanding protein. The sequence is that of Threonine--tRNA ligase catalytic subunit from Metallosphaera sedula (strain ATCC 51363 / DSM 5348 / JCM 9185 / NBRC 15509 / TH2).